We begin with the raw amino-acid sequence, 175 residues long: Alkyl hydroperoxide reductase AhpD (175 aa).

Cysteine 130 (proton donor) is an active-site residue. A disulfide bridge connects residues cysteine 130 and cysteine 133. Cysteine 133 acts as the Cysteine sulfenic acid (-SOH) intermediate in catalysis.

Belongs to the AhpD family. Homotrimer.

It catalyses the reaction N(6)-[(R)-dihydrolipoyl]-L-lysyl-[lipoyl-carrier protein] + a hydroperoxide = N(6)-[(R)-lipoyl]-L-lysyl-[lipoyl-carrier protein] + an alcohol + H2O. Functionally, antioxidant protein with alkyl hydroperoxidase activity. Required for the reduction of the AhpC active site cysteine residues and for the regeneration of the AhpC enzyme activity. In Mycobacteroides abscessus (strain ATCC 19977 / DSM 44196 / CCUG 20993 / CIP 104536 / JCM 13569 / NCTC 13031 / TMC 1543 / L948) (Mycobacterium abscessus), this protein is Alkyl hydroperoxide reductase AhpD.